A 100-amino-acid chain; its full sequence is NADH-quinone oxidoreductase subunit K (100 aa).

3 helical membrane passes run Leu4 to Val24, Leu29 to Val49, and Ile60 to Leu80.

This sequence belongs to the complex I subunit 4L family. In terms of assembly, NDH-1 is composed of 13 different subunits. Subunits NuoA, H, J, K, L, M, N constitute the membrane sector of the complex.

Its subcellular location is the cell inner membrane. The enzyme catalyses a quinone + NADH + 5 H(+)(in) = a quinol + NAD(+) + 4 H(+)(out). NDH-1 shuttles electrons from NADH, via FMN and iron-sulfur (Fe-S) centers, to quinones in the respiratory chain. The immediate electron acceptor for the enzyme in this species is believed to be ubiquinone. Couples the redox reaction to proton translocation (for every two electrons transferred, four hydrogen ions are translocated across the cytoplasmic membrane), and thus conserves the redox energy in a proton gradient. The polypeptide is NADH-quinone oxidoreductase subunit K (Blochmanniella pennsylvanica (strain BPEN)).